The chain runs to 1224 residues: Cytosolic carboxypeptidase 1 (1224 aa).

The tract at residues Pro-361–Ile-398 is disordered. The segment covering Asp-363 to Lys-389 has biased composition (acidic residues). One can recognise a Peptidase M14 domain in the interval Tyr-846–Lys-1136. Zn(2+) is bound by residues His-918, Glu-921, and His-1015. Catalysis depends on Glu-1100, which acts as the Proton donor/acceptor. Residues Ser-1186–Leu-1197 show a composition bias toward acidic residues. The segment at Ser-1186–Ser-1224 is disordered. Polar residues predominate over residues Ala-1206–Ser-1224.

Belongs to the peptidase M14 family. The cofactor is Zn(2+).

Its subcellular location is the cytoplasm. It is found in the cytosol. It localises to the nucleus. The protein localises to the mitochondrion. The catalysed reaction is (L-glutamyl)(n+1)-gamma-L-glutamyl-L-glutamyl-[protein] + H2O = (L-glutamyl)(n)-gamma-L-glutamyl-L-glutamyl-[protein] + L-glutamate. The enzyme catalyses C-terminal L-alpha-aminoacyl-L-glutamyl-L-glutamyl-[tubulin] + H2O = C-terminal L-alpha-aminoacyl-L-glutamyl-[tubulin] + L-glutamate. Its function is as follows. Metallocarboxypeptidase that mediates protein deglutamylation of tubulin and non-tubulin target proteins. Catalyzes the removal of polyglutamate side chains present on the gamma-carboxyl group of glutamate residues within the C-terminal tail of alpha- and beta-tubulin. Specifically cleaves tubulin long-side-chains, while it is not able to remove the branching point glutamate. Also catalyzes the removal of polyglutamate residues from the carboxy-terminus of alpha-tubulin as well as non-tubulin proteins. This Gallus gallus (Chicken) protein is Cytosolic carboxypeptidase 1 (AGTPBP1).